Consider the following 235-residue polypeptide: Large ribosomal subunit protein uL1 (235 aa).

This sequence belongs to the universal ribosomal protein uL1 family. Part of the 50S ribosomal subunit.

In terms of biological role, binds directly to 23S rRNA. The L1 stalk is quite mobile in the ribosome, and is involved in E site tRNA release. Protein L1 is also a translational repressor protein, it controls the translation of the L11 operon by binding to its mRNA. The polypeptide is Large ribosomal subunit protein uL1 (Blochmanniella floridana).